The sequence spans 759 residues: Polyribonucleotide nucleotidyltransferase (759 aa).

Mg(2+) is bound by residues Asp-522 and Asp-528. The 60-residue stretch at 588–647 (PRITTIKVPVDKIGEVIGPKGKMINSITEETGASISIEDDGTVFVGASNGEAAQAAIDKI) folds into the KH domain. An S1 motif domain is found at 659–728 (GERFLGTVVK…NRGKISLVLV (70 aa)). The segment at 734-759 (AEASDNGSATPSDKAPATADATTAGN) is disordered. Residues 741 to 759 (SATPSDKAPATADATTAGN) show a composition bias toward low complexity.

It belongs to the polyribonucleotide nucleotidyltransferase family. Requires Mg(2+) as cofactor.

The protein resides in the cytoplasm. It catalyses the reaction RNA(n+1) + phosphate = RNA(n) + a ribonucleoside 5'-diphosphate. Functionally, involved in mRNA degradation. Catalyzes the phosphorolysis of single-stranded polyribonucleotides processively in the 3'- to 5'-direction. The sequence is that of Polyribonucleotide nucleotidyltransferase from Mycobacterium sp. (strain JLS).